The chain runs to 345 residues: Peptidoglycan-recognition protein LE (345 aa).

Basic and acidic residues predominate over residues 1–16; it reads MSESGIKKLSQERTRE. The interval 1-38 is disordered; sequence MSESGIKKLSQERTREWLASQEDEELESIAESSVVDSL. N52, N95, N98, and N106 each carry an N-linked (GlcNAc...) asparagine glycan. The interval 124–152 is disordered; that stretch reads NRRDRRHVSPPRDNAPKTPTHFEDDYQDE. The 127-residue stretch at 198 to 324 folds into the N-acetylmuramoyl-L-alanine amidase domain; it reads PVKYVVILHT…CQCNSTESPG (127 aa). Peptidoglycan is bound by residues H206, 229–240, R254, 261–267, and 314–322; these read HIESRGWNDIAY, AHTLGYN, and HCQCNSTES. N318 is a glycosylation site (N-linked (GlcNAc...) asparagine).

The protein belongs to the N-acetylmuramoyl-L-alanine amidase 2 family. As to quaternary structure, monomer. Peptidoglycan binding induces oligomerization. In terms of tissue distribution, expressed in hemolymph. Localizes at the lumenal surface of the trachea (at protein level).

The protein localises to the secreted. Functionally, peptidoglycan-recognition protein that plays a key role in innate immunity by binding to murein peptidoglycans (PGN) of Gram-negative bacteria and activating the imd/Relish pathway. Has no activity against on Gram-positive bacteria. Binds to diaminopimelic acid-type PGN (DAP-type PGN), an activator of the imd/Relish pathway. Functions synergistically with PGRP-LC in producing resistance to E.coli and B.megaterium infections, which have the DAP-type peptidoglycan. Acts both upstream and in parallel with PGRP-LC in the imd/Relish pathway, and is required for infection-dependent activation of melanization. Required for Relish processing and nuclear translocation following proteolytic cleavage. Its localization suggests a role in the recognition and subsequent activation of the signaling at the first point of contact with invading bacteria. This chain is Peptidoglycan-recognition protein LE (PGRP-LE), found in Drosophila melanogaster (Fruit fly).